The sequence spans 315 residues: Tubulin beta-1 chain (315 aa).

Ser6, Gly10, Thr11, Gly12, Asn72, and Asn94 together coordinate GTP. Residues 295-315 (DATADEEEYYEDEEEEEAQGM) are disordered. Positions 297 to 315 (TADEEEYYEDEEEEEAQGM) are enriched in acidic residues.

Belongs to the tubulin family. In terms of assembly, dimer of alpha and beta chains. A typical microtubule is a hollow water-filled tube with an outer diameter of 25 nm and an inner diameter of 15 nM. Alpha-beta heterodimers associate head-to-tail to form protofilaments running lengthwise along the microtubule wall with the beta-tubulin subunit facing the microtubule plus end conferring a structural polarity. Microtubules usually have 13 protofilaments but different protofilament numbers can be found in some organisms and specialized cells. Mg(2+) is required as a cofactor.

It is found in the cytoplasm. Its subcellular location is the cytoskeleton. Tubulin is the major constituent of microtubules, a cylinder consisting of laterally associated linear protofilaments composed of alpha- and beta-tubulin heterodimers. Microtubules grow by the addition of GTP-tubulin dimers to the microtubule end, where a stabilizing cap forms. Below the cap, tubulin dimers are in GDP-bound state, owing to GTPase activity of alpha-tubulin. The sequence is that of Tubulin beta-1 chain (TUBB1) from Daucus carota (Wild carrot).